A 590-amino-acid polypeptide reads, in one-letter code: MSSSPPLDGSDHPAHSSGQSPEAGNPTSLARSVSASVCPVKPDNPDSTEPEAVTALEASDGFQINSKQTDRLPLQGHSPCAAAAAPSSAMPLRHSSEAAGVADSLEASAERRTQGLRFHLHTRQEVNLSITTTRMHEPQMFAGEEGWHPENQNPSQVNDLQQHQEPENARHEAGPRDAPSDTGDLELPGERQQKHEVADREATMRGGRLQQDAGLPDPGKGALPSGHCGRPDSETLMEVDAAEQSLVAVLSSSVGNGSASGLTLGNPLMEVELPTCSPSSEILNGSIPIQDLQPPEGSVEMPGTDRAYGGRASSSSVCGSSQPPAESAEESCSSITTALKELHELLVISSKPASEAAYEEVTCQSEGTAWGQTRVNPSERWTESERRTQDEDRPQVSHAIPECVKTEKLTDASPDTRIEDGENATFQGPGGGLSTDHGAPRSRGSVHESRSVTVTSAETSNQSHRTLGVEISPRLLTGEGDALSQTCEQTKSLLVKDLGQGTQNPAPDRPATREDVCRDAARPSLEVEAPPSHSSGPCILPPLGFPAADIDRILRAGFTLQEALGALHRVGGNADLALLVLLAKNIVVPT.

4 disordered regions span residues 1–116, 144–234, 277–331, and 359–466; these read MSSS…TQGL, EEGW…PDSE, SPSS…AEES, and EEVT…SHRT. Polar residues predominate over residues 16-35; it reads SSGQSPEAGNPTSLARSVSA. A compositionally biased stretch (low complexity) spans 78–91; it reads SPCAAAAAPSSAMP. Residues 150–161 are compositionally biased toward polar residues; that stretch reads ENQNPSQVNDLQ. Basic and acidic residues-rich tracts occupy residues 162–179 and 188–203; these read QHQE…RDAP and PGER…REAT. The segment covering 313–331 has biased composition (low complexity); sequence SSSSVCGSSQPPAESAEES. Residues 362 to 376 show a composition bias toward polar residues; sequence TCQSEGTAWGQTRVN. Basic and acidic residues-rich tracts occupy residues 380–395 and 404–420; these read RWTE…DRPQ and VKTE…RIED. The segment covering 451–465 has biased composition (polar residues); that stretch reads SVTVTSAETSNQSHR. One can recognise a UBA domain in the interval 544–584; it reads GFPAADIDRILRAGFTLQEALGALHRVGGNADLALLVLLAK.

In terms of assembly, interacts with YRDC. In terms of tissue distribution, highly expressed in renal outer medulla, renal inner medulla, duodenum, ileum and jejunum. Moderately expressed in renal outer cortex, renal papilla, brain and liver.

It localises to the cell membrane. Its subcellular location is the nucleus. It is found in the golgi apparatus. The protein resides in the trans-Golgi network. Mediates transcriptional and post-transcriptional regulation of SLC5A1. Inhibits a dynamin and PKC-dependent exocytotic pathway of SLC5A1. Also involved in transcriptional regulation of SLC22A2. Exhibits glucose-dependent, short-term inhibition of SLC5A1 and SLC22A2 by inhibiting the release of vesicles from the trans-Golgi network. This Oryctolagus cuniculus (Rabbit) protein is Regulatory solute carrier protein family 1 member 1 (RSC1A1).